A 244-amino-acid polypeptide reads, in one-letter code: Acetoacetate decarboxylase (244 aa).

The active-site Schiff-base intermediate with acetoacetate is lysine 115.

Belongs to the ADC family. As to quaternary structure, homododecamer.

It catalyses the reaction acetoacetate + H(+) = acetone + CO2. In terms of biological role, catalyzes the conversion of acetoacetate to acetone and carbon dioxide. The protein is Acetoacetate decarboxylase of Clostridium acetobutylicum (strain ATCC 824 / DSM 792 / JCM 1419 / IAM 19013 / LMG 5710 / NBRC 13948 / NRRL B-527 / VKM B-1787 / 2291 / W).